A 199-amino-acid polypeptide reads, in one-letter code: Probable cobalt-precorrin-6B C(15)-methyltransferase (decarboxylating) (199 aa).

S-adenosyl-L-methionine contacts are provided by residues threonine 24, 48–52 (GCGTG), aspartate 72, and alanine 101.

The protein belongs to the methyltransferase superfamily. Archaeal-type CbiT family.

It catalyses the reaction Co-precorrin-6B + S-adenosyl-L-methionine = Co-precorrin-7 + S-adenosyl-L-homocysteine + CO2. It participates in cofactor biosynthesis; adenosylcobalamin biosynthesis; cob(II)yrinate a,c-diamide from sirohydrochlorin (anaerobic route): step 8/10. Catalyzes the methylation of C-15 in cobalt-precorrin-6B followed by the decarboxylation of C-12 to form cobalt-precorrin-7. The protein is Probable cobalt-precorrin-6B C(15)-methyltransferase (decarboxylating) of Saccharolobus islandicus (strain L.S.2.15 / Lassen #1) (Sulfolobus islandicus).